The chain runs to 155 residues: Protein LOL2 (155 aa).

The residue at position 1 (M1) is an N-acetylmethionine. A disordered region spans residues 1 to 35 (MEEIQQQTQKEEQKHREEEEEEEEGPPPGWESAVL). Putative zinc finger regions lie at residues 60–90 (QMVC…VNLV) and 98–128 (QVNC…VTDI). The disordered stretch occupies residues 130 to 155 (ENNKRPPWSEQQGPLKSLSSLRRAEN). Positions 138 to 149 (SEQQGPLKSLSS) are enriched in polar residues.

Its subcellular location is the nucleus. In terms of biological role, putative zinc finger that may be involved in programmed cell death and defense response. This Arabidopsis thaliana (Mouse-ear cress) protein is Protein LOL2 (LOL2).